Here is a 170-residue protein sequence, read N- to C-terminus: Cathelicidin antimicrobial peptide (170 aa).

Positions 1 to 30 (MKTQRDGHSLGWWSLVLLLLGLVMPLAIIA) are cleaved as a signal peptide. The propeptide at 31–131 (QVLSYKEAVL…DISCDKDNKR (101 aa)) is cathelin-like domain (CLD). 2 cysteine pairs are disulfide-bonded: C86/C97 and C108/C125. Residues 150–162 (SKRIVQRIKDFLR) form an active core region.

It belongs to the cathelicidin family. In terms of assembly, monomer, homodimer or homotrimer (in vitro). Oligomerizes as tetra- or hexamer in solution (in vitro). Post-translationally, proteolytically cleaved by proteinase PRTN3 into antibacterial peptide LL-37. Proteolytically cleaved by cathepsin CTSG and neutrophil elastase ELANE. Resistant to proteolytic degradation in solution, and when bound to both zwitterionic (mimicking mammalian membranes) and negatively charged membranes (mimicking bacterial membranes). In terms of processing, after secretion onto the skin surface, the CAMP gene product is processed by a serine protease-dependent mechanism into multiple novel antimicrobial peptides distinct from and shorter than cathelicidin LL-37. These peptides show enhanced antimicrobial action, acquiring the ability to kill skin pathogens such as S.aureus, E.coli and C.albicans. These peptides have lost the ability to stimulate CXCL8/IL8 release from keratinocytes. The peptides act synergistically, killing bacteria at lower concentrations when present together, and maintain activity at increased salt condition.

Its subcellular location is the secreted. It localises to the vesicle. In terms of biological role, antimicrobial protein that is an integral component of the innate immune system. Binds to bacterial lipopolysaccharides (LPS). Acts via neutrophil N-formyl peptide receptors to enhance the release of CXCL2. Postsecretory processing generates multiple cathelicidin antimicrobial peptides with various lengths which act as a topical antimicrobial defense in sweat on skin. The unprocessed precursor form, cathelicidin antimicrobial peptide, inhibits the growth of Gram-negative E.coli and E.aerogenes with efficiencies comparable to that of the mature peptide LL-37 (in vitro). Functionally, antimicrobial peptide that is an integral component of the innate immune system. Binds to bacterial lipopolysaccharides (LPS). Causes membrane permeabilization by forming transmembrane pores (in vitro). Causes lysis of E.coli. Exhibits antimicrobial activity against Gram-negative bacteria such as P.aeruginosa, S.typhimurium, E.aerogenes, E.coli and P.syringae, Gram-positive bacteria such as L.monocytogenes, S.epidermidis, S.pyogenes and S.aureus, as well as vancomycin-resistant enterococci (in vitro). Exhibits antimicrobial activity against methicillin-resistant S.aureus, P.mirabilis, and C.albicans in low-salt media, but not in media containing 100 mM NaCl (in vitro). Forms chiral supramolecular assemblies with quinolone signal (PQS) molecules of P.aeruginosa, which may lead to interference of bacterial quorum signaling and perturbance of bacterial biofilm formation. May form supramolecular fiber-like assemblies on bacterial membranes. Induces cytokine and chemokine producation as well as TNF/TNFA and CSF2/GMCSF production in normal human keratinocytes. Exhibits hemolytic activity against red blood cells. Its function is as follows. Exhibits antimicrobial activity against E.coli and B.megaterium (in vitro). This chain is Cathelicidin antimicrobial peptide, found in Gorilla gorilla gorilla (Western lowland gorilla).